Consider the following 877-residue polypeptide: Leucine--tRNA ligase (877 aa).

A 'HIGH' region motif is present at residues 48–58 (PYPSGKLHMGH). The 'KMSKS' region signature appears at 636-640 (KMSKS). Lys-639 is an ATP binding site.

This sequence belongs to the class-I aminoacyl-tRNA synthetase family.

It is found in the cytoplasm. It catalyses the reaction tRNA(Leu) + L-leucine + ATP = L-leucyl-tRNA(Leu) + AMP + diphosphate. This Ralstonia pickettii (strain 12J) protein is Leucine--tRNA ligase.